A 280-amino-acid chain; its full sequence is Energy-coupling factor transporter ATP-binding protein EcfA2 (280 aa).

An ABC transporter domain is found at 3-245 (INLQNVSYTY…VSLLEKKQLG (243 aa)). 40–47 (GHTGSGKS) provides a ligand contact to ATP.

This sequence belongs to the ABC transporter superfamily. Energy-coupling factor EcfA family. Forms a stable energy-coupling factor (ECF) transporter complex composed of 2 membrane-embedded substrate-binding proteins (S component), 2 ATP-binding proteins (A component) and 2 transmembrane proteins (T component).

It is found in the cell membrane. ATP-binding (A) component of a common energy-coupling factor (ECF) ABC-transporter complex. Unlike classic ABC transporters this ECF transporter provides the energy necessary to transport a number of different substrates. The polypeptide is Energy-coupling factor transporter ATP-binding protein EcfA2 (Streptococcus pyogenes serotype M28 (strain MGAS6180)).